A 295-amino-acid polypeptide reads, in one-letter code: Phosphoribosylaminoimidazole-succinocarboxamide synthase (295 aa).

This sequence belongs to the SAICAR synthetase family.

The enzyme catalyses 5-amino-1-(5-phospho-D-ribosyl)imidazole-4-carboxylate + L-aspartate + ATP = (2S)-2-[5-amino-1-(5-phospho-beta-D-ribosyl)imidazole-4-carboxamido]succinate + ADP + phosphate + 2 H(+). The protein operates within purine metabolism; IMP biosynthesis via de novo pathway; 5-amino-1-(5-phospho-D-ribosyl)imidazole-4-carboxamide from 5-amino-1-(5-phospho-D-ribosyl)imidazole-4-carboxylate: step 1/2. The sequence is that of Phosphoribosylaminoimidazole-succinocarboxamide synthase from Desulforapulum autotrophicum (strain ATCC 43914 / DSM 3382 / VKM B-1955 / HRM2) (Desulfobacterium autotrophicum).